A 284-amino-acid chain; its full sequence is 4-diphosphocytidyl-2-C-methyl-D-erythritol kinase (284 aa).

Residue Lys9 is part of the active site. 90-100 (PLVSGLGGDSS) contacts ATP. The active site involves Asp132.

It belongs to the GHMP kinase family. IspE subfamily.

The enzyme catalyses 4-CDP-2-C-methyl-D-erythritol + ATP = 4-CDP-2-C-methyl-D-erythritol 2-phosphate + ADP + H(+). It functions in the pathway isoprenoid biosynthesis; isopentenyl diphosphate biosynthesis via DXP pathway; isopentenyl diphosphate from 1-deoxy-D-xylulose 5-phosphate: step 3/6. Its function is as follows. Catalyzes the phosphorylation of the position 2 hydroxy group of 4-diphosphocytidyl-2C-methyl-D-erythritol. In Dehalococcoides mccartyi (strain ATCC BAA-2266 / KCTC 15142 / 195) (Dehalococcoides ethenogenes (strain 195)), this protein is 4-diphosphocytidyl-2-C-methyl-D-erythritol kinase.